The following is a 92-amino-acid chain: Putative protein IntG (92 aa).

It belongs to the 'phage' integrase family.

This chain is Putative protein IntG (intG), found in Escherichia coli (strain K12).